A 344-amino-acid polypeptide reads, in one-letter code: Aurora kinase B (344 aa).

Residue Thr-35 is modified to Phosphothreonine. Ser-62 carries the phosphoserine modification. Thr-64 is modified (phosphothreonine). The region spanning 77–327 is the Protein kinase domain; sequence FEIGRPLGKG…LAQVSAHPWV (251 aa). ATP-binding positions include 83–91 and Lys-106; that span reads LGKGKFGNV. Asp-200 (proton acceptor) is an active-site residue. An N6-acetyllysine modification is found at Lys-215. Phosphoserine is present on Ser-227. Thr-232 is subject to Phosphothreonine; by autocatalysis.

The protein belongs to the protein kinase superfamily. Ser/Thr protein kinase family. Aurora subfamily. As to quaternary structure, component of the chromosomal passenger complex (CPC) composed of at least BIRC5/survivin, CDCA8/borealin, INCENP, AURKB or AURKC; predominantly independent AURKB- and AURKC-containing complexes exist. Associates with RACGAP1 during M phase. Interacts with SPDYC; this interaction may be required for proper localization of active, Thr-232-phosphorylated AURKB form during prometaphase and metaphase. Interacts with p53/TP53. Interacts (via the middle kinase domain) with NOC2L (via the N- and C-terminus domains). Interacts with CDCA1. Interacts with EVI5. Interacts with JTB. Interacts with NDC80. Interacts with PSMA3. Interacts with RNF2/RING1B. Interacts with SEPTIN1. Interacts with SIRT2. Interacts with TACC1. Interacts with TTC28. Post-translationally, the phosphorylation of Thr-232 requires the binding to INCENP and occurs by means of an autophosphorylation mechanism. Thr-232 phosphorylation is indispensable for the AURKB kinase activity. In terms of processing, acetylated at Lys-215 by KAT5 at kinetochores, increasing AURKB activity and promoting accurate chromosome segregation in mitosis. Ubiquitinated by different BCR (BTB-CUL3-RBX1) E3 ubiquitin ligase complexes. Ubiquitinated by the BCR(KLHL9-KLHL13) E3 ubiquitin ligase complex, ubiquitination leads to removal from mitotic chromosomes and is required for cytokinesis. During anaphase, the BCR(KLHL21) E3 ubiquitin ligase complex recruits the CPC complex from chromosomes to the spindle midzone and mediates the ubiquitination of AURKB. Ubiquitination of AURKB by BCR(KLHL21) E3 ubiquitin ligase complex may not lead to its degradation by the proteasome. Deubiquitinated by USP35; inhibiting CDH1-mediated degradation of AURKB.

It localises to the nucleus. The protein resides in the chromosome. The protein localises to the centromere. It is found in the kinetochore. Its subcellular location is the cytoplasm. It localises to the cytoskeleton. The protein resides in the spindle. The protein localises to the midbody. The catalysed reaction is L-seryl-[protein] + ATP = O-phospho-L-seryl-[protein] + ADP + H(+). It carries out the reaction L-threonyl-[protein] + ATP = O-phospho-L-threonyl-[protein] + ADP + H(+). With respect to regulation, activity is greatly increased when AURKB is within the CPC complex. In particular, AURKB-phosphorylated INCENP acts as an activator of AURKB. Positive feedback between HASPIN and AURKB contributes to CPC localization. Its function is as follows. Serine/threonine-protein kinase component of the chromosomal passenger complex (CPC), a complex that acts as a key regulator of mitosis. The CPC complex has essential functions at the centromere in ensuring correct chromosome alignment and segregation and is required for chromatin-induced microtubule stabilization and spindle assembly. Involved in the bipolar attachment of spindle microtubules to kinetochores and is a key regulator for the onset of cytokinesis during mitosis. Required for central/midzone spindle assembly and cleavage furrow formation. Key component of the cytokinesis checkpoint, a process required to delay abscission to prevent both premature resolution of intercellular chromosome bridges and accumulation of DNA damage: phosphorylates CHMP4C, leading to retain abscission-competent VPS4 (VPS4A and/or VPS4B) at the midbody ring until abscission checkpoint signaling is terminated at late cytokinesis. AURKB phosphorylates the CPC complex subunits BIRC5/survivin, CDCA8/borealin and INCENP. Phosphorylation of INCENP leads to increased AURKB activity. Other known AURKB substrates involved in centromeric functions and mitosis are CENPA, DES/desmin, GPAF, KIF2C, NSUN2, RACGAP1, SEPTIN1, VIM/vimentin, HASPIN, and histone H3. A positive feedback loop involving HASPIN and AURKB contributes to localization of CPC to centromeres. Phosphorylation of VIM controls vimentin filament segregation in cytokinetic process, whereas histone H3 is phosphorylated at 'Ser-10' and 'Ser-28' during mitosis (H3S10ph and H3S28ph, respectively). AURKB is also required for kinetochore localization of BUB1 and SGO1. Phosphorylation of p53/TP53 negatively regulates its transcriptional activity. Key regulator of active promoters in resting B- and T-lymphocytes: acts by mediating phosphorylation of H3S28ph at active promoters in resting B-cells, inhibiting RNF2/RING1B-mediated ubiquitination of histone H2A and enhancing binding and activity of the USP16 deubiquitinase at transcribed genes. Acts as an inhibitor of CGAS during mitosis: catalyzes phosphorylation of the N-terminus of CGAS during the G2-M transition, blocking CGAS liquid phase separation and activation, and thereby preventing CGAS-induced autoimmunity. Phosphorylates KRT5 during anaphase and telophase. Phosphorylates ATXN10 which promotes phosphorylation of ATXN10 by PLK1 and may play a role in the regulation of cytokinesis and stimulating the proteasomal degradation of ATXN10. In Sus scrofa (Pig), this protein is Aurora kinase B (AURKB).